The primary structure comprises 2843 residues: Adenomatous polyposis coli protein (2843 aa).

Alanine 2 carries the post-translational modification N-acetylalanine. Residues 2–61 (AAASYDQLLKQVEALKMENSNLRQELEDNSNHLTKLETEASNMKEVLKQLQGSIEDEAMA) are a coiled coil. Phosphoserine is present on residues serine 107 and serine 111. Positions 127-248 (SRESTGYLEE…ATEAERSSQN (122 aa)) form a coiled coil. The disordered stretch occupies residues 239–305 (ATEAERSSQN…STHSAPRRLT (67 aa)). The span at 241 to 261 (EAERSSQNKHETGSHDAERQN) shows a compositional bias: basic and acidic residues. Polar residues predominate over residues 271–282 (MATSGNGQGSTT). Residues 290–299 (SVLSSSSTHS) are compositionally biased toward low complexity. 7 ARM repeats span residues 453–495 (LMKL…HYSI), 505–547 (LTNL…IASV), 548–591 (LRNL…VLSA), 592–638 (LWNL…GGGI), 639–683 (LRNV…ACGT), 684–725 (LWNL…SAAA), and 726–767 (LRNL…LDAQ). Residues serine 744, serine 748, and serine 780 each carry the phosphoserine modification. The segment at 828 to 878 (TTVLPSSSSSRGSLDSSRSEKDRSLERERGIGLGNYHPATENPGTSSKRGL) is disordered. Over residues 833-843 (SSSSSRGSLDS) the composition is skewed to low complexity. Positions 844-857 (SRSEKDRSLERERG) are enriched in basic and acidic residues. Positions 869 to 878 (NPGTSSKRGL) are enriched in polar residues. Serine 908 carries the post-translational modification Phosphoserine. 2 disordered regions span residues 923–943 (RRSS…SENS) and 958–987 (RSSN…ESYS). Positions 927-943 (AAHTHSNTYNFTKSENS) are enriched in polar residues. Residues 960–1337 (SNDSLNSVSS…QHPRTKSSRL (378 aa)) are responsible for down-regulation through a process mediated by direct ubiquitination. Residues 961–971 (NDSLNSVSSSD) are compositionally biased toward low complexity. 3 positions are modified to phosphoserine: serine 987, serine 1038, and serine 1042. The segment at 1020–1169 (ELDTPINYSL…TNYSIKYNEE (150 aa)) is interaction with catenins. Disordered stretches follow at residues 1099 to 1169 (VSPY…YNEE), 1190 to 1244 (SQKQ…GQPQ), and 1311 to 1376 (IGTR…PEHY). The segment covering 1107 to 1130 (ANGSETNRVGSNHGINQNVSQSLC) has biased composition (polar residues). A compositionally biased stretch (basic and acidic residues) spans 1146-1159 (RYSEEEQHEEEERP). A compositionally biased stretch (low complexity) spans 1190–1224 (SQKQSFSFSKSSSGQSSKTEHMSSSSENTSTPSSN). Residues 1225–1244 (AKRQNQLHPSSAQSRSGQPQ) show a composition bias toward polar residues. Composition is skewed to low complexity over residues 1335 to 1345 (SRLQGSSLSSE) and 1355 to 1366 (SSGAKSPSKSGA). Phosphoserine occurs at positions 1360, 1371, 1385, 1392, and 1395. 5 disordered regions span residues 1403-1475 (SSVQ…VNAA), 1526-1569 (PPVQ…DSDD), 1583-1611 (MPTK…KPSQ), 1664-1717 (SPPN…DDNK), and 1729-1836 (NSAM…RVRG). At threonine 1438 the chain carries Phosphothreonine. Basic and acidic residues-rich tracts occupy residues 1448-1466 (TKRE…RESG) and 1540-1564 (EQPK…KDLL). Serine 1567 bears the Phosphoserine mark. Residues 1683–1698 (EFEKRDTIPTEGRSTD) show a composition bias toward basic and acidic residues. Over residues 1735-1744 (GKSHKPFRVK) the composition is skewed to basic residues. The residue at position 1774 (serine 1774) is a Phosphoserine. Composition is skewed to basic and acidic residues over residues 1785 to 1794 (YRTRVRKNAD) and 1804 to 1813 (VFSDNKDSKK). Residues serine 1861, serine 1863, and serine 1864 each carry the phosphoserine modification. A highly charged region spans residues 1866-1893 (DFDDDDVDLSREKAELRKAKENKESEAK). The span at 1881 to 1896 (LRKAKENKESEAKVTS) shows a compositional bias: basic and acidic residues. Disordered stretches follow at residues 1881–1950 (LRKA…TDEK), 1965–2011 (HNSS…APKS), and 2043–2072 (ISSA…GGIL). Polar residues-rich tracts occupy residues 1897-1913 (HTEL…TQAI) and 1928-1938 (QKQSTFPQSSK). Over residues 1939–1950 (DIPDRGAATDEK) the composition is skewed to basic and acidic residues. 2 positions are modified to phosphoserine: serine 1971 and serine 1973. Residues 1979–1991 (NNNKENEPIKETE) show a composition bias toward basic and acidic residues. Positions 2035–2059 (EDDLLQECISSAMPKKKKPSRLKGD) are interaction with AXIN1. Serine 2088, serine 2093, serine 2125, serine 2129, serine 2130, and serine 2132 each carry phosphoserine. Disordered stretches follow at residues 2147-2635 (PFHL…SGAT) and 2667-2714 (NNPR…VPMR). A Phosphothreonine modification is found at threonine 2151. The interval 2167–2674 (ILKPGEKSTL…PINNPRSGRS (508 aa)) is basic region. Residues 2169–2187 (KPGEKSTLETKKIESESKG) are compositionally biased toward basic and acidic residues. Composition is skewed to polar residues over residues 2203–2223 (VRSN…NMPS) and 2257–2271 (ASKS…TTSP). Phosphoserine occurs at positions 2260, 2270, and 2283. Residues 2286 to 2331 (ARQTSQIGGSSKAPSRSGSRDSTPSRPAQQPLSRPIQSPGRNSISP) are compositionally biased toward polar residues. Over residues 2348-2369 (TSSPSTASTKSSGSGKMSYTSP) the composition is skewed to low complexity. Composition is skewed to polar residues over residues 2370-2409 (GRQM…NGNG) and 2418-2427 (RMSSTKSSGS). Over residues 2459–2477 (SASFESLSPSSRPASPTRS) the composition is skewed to low complexity. Residues serine 2473 and serine 2535 each carry the phosphoserine modification. The tract at residues 2475-2843 (TRSQAQTPVL…HSGSYLVTSV (369 aa)) is interaction with DLG1. Residues 2518–2535 (NDGRPAKRHDIARSHSES) are compositionally biased toward basic and acidic residues. Polar residues predominate over residues 2555 to 2568 (SSSLPRVSTWRRTG). Phosphoserine is present on serine 2569. Positions 2569–2579 (SSSSILSASSE) are enriched in low complexity. Over residues 2580 to 2592 (SSEKAKSEDEKHV) the composition is skewed to basic and acidic residues. 3 stretches are compositionally biased toward polar residues: residues 2593–2608 (NSIS…QVSA), 2620–2635 (FSPT…SGAT), and 2668–2679 (NPRSGRSPTGNT). Phosphoserine is present on residues serine 2671 and serine 2674. The tract at residues 2674–2843 (SPTGNTPPVI…HSGSYLVTSV (170 aa)) is interaction with MAPRE1. A Phosphothreonine modification is found at threonine 2679. Serine 2710 and serine 2724 each carry phosphoserine. The disordered stretch occupies residues 2729-2843 (DAPDQKGTEI…HSGSYLVTSV (115 aa)). Polar residues predominate over residues 2741–2757 (GQNNPVPVSETNESSIV). Residues 2763-2774 (SSSSSSKHSSPS) are compositionally biased toward low complexity. The span at 2784–2812 (FNYNPSPRKSSADSTSARPSQIPTPVNNN) shows a compositional bias: polar residues. Position 2789 is a phosphoserine (serine 2789). The Microtubule tip localization signal motif lies at 2803-2806 (SQIP). A PDZ-binding motif is present at residues 2841–2843 (TSV).

Belongs to the adenomatous polyposis coli (APC) family. Forms homooligomers. Found in a complex consisting of ARHGEF4, APC and CTNNB1. Found in a complex composed of MACF1, APC, AXIN1, CTNNB1 and GSK3B. The complex composed, at least, of APC, CTNNB1 and GSK3B interacts with JPT1; the interaction requires the inactive form of GSK3B (phosphorylated at 'Ser-9'). Interacts with APC2. Interacts with DLG1 (via PDZ domains) and DLG3 (via PDZ domains). Interacts with alpha- and beta-catenins. Interacts with AXIN1 (via RGS domain). Interacts with ARHGEF4 (via N-terminus). Interacts (via C-terminal residues 2674-2843) with MAPRE1 (via C-terminal residues 206-211); the interaction inhibits association with and bundling of F-actin. Interacts with MAPRE2 and MAPRE3 (via C-terminus). Interacts with DIAPH1; DIAPH1 acts as a scaffold protein for MAPRE1 and APC to stabilize microtubules and promote cell migration. Interacts with DIAPH2. Interacts with SCRIB; may mediate APC targeting to adherens junctions of epithelial cells. Interacts with SPATA13 (via N-terminus and SH3 domain). Interacts with ASAP1 (via SH3 domain). Interacts (at the cell membrane) with AMER1 and AMER2 (via ARM repeats). Interacts with KHDRBS1. Interacts with actin; binds both to F-actin and actin filament bundles. In terms of processing, phosphorylated; phosphorylation enhances the F-actin bundling activity. Phosphorylated by GSK3B. Ubiquitinated, leading to its degradation by the proteasome. Ubiquitination is facilitated by Axin. Deubiquitinated by ZRANB1/TRABID. In terms of tissue distribution, expressed in a variety of tissues: brain, small intestine, colon, thymus, skeletal muscle, heart, prostate, lung, spleen, ovary, testis kidney, placenta, blood and liver. Isoform 1A: Very strongly expressed in brain but has relatively low expression levels in other tissues. Isoform 1B: Predominant form in all tissues except for brain, including gastric mucosa and blood.

The protein resides in the cell junction. It is found in the adherens junction. Its subcellular location is the cytoplasm. It localises to the cytoskeleton. The protein localises to the cell projection. The protein resides in the lamellipodium. It is found in the ruffle membrane. Its subcellular location is the cell membrane. Its function is as follows. Tumor suppressor. Promotes rapid degradation of CTNNB1 and participates in Wnt signaling as a negative regulator. APC activity is correlated with its phosphorylation state. Activates the GEF activity of SPATA13 and ARHGEF4. Plays a role in hepatocyte growth factor (HGF)-induced cell migration. Required for MMP9 up-regulation via the JNK signaling pathway in colorectal tumor cells. Associates with both microtubules and actin filaments, components of the cytoskeleton. Plays a role in mediating the organization of F-actin into ordered bundles. Functions downstream of Rho GTPases and DIAPH1 to selectively stabilize microtubules. Acts as a mediator of ERBB2-dependent stabilization of microtubules at the cell cortex. It is required for the localization of MACF1 to the cell membrane and this localization of MACF1 is critical for its function in microtubule stabilization. This is Adenomatous polyposis coli protein from Homo sapiens (Human).